The chain runs to 316 residues: uncharacterized protein (316 aa).

The disordered stretch occupies residues 1-34; sequence MATKRKIGDGYSSSDDNQPKRERSEGGEDQQLVP. Over residues 17 to 26 the composition is skewed to basic and acidic residues; it reads NQPKRERSEG.

This is an uncharacterized protein from Lepidoptera (butterflies and moths).